The following is a 189-amino-acid chain: MYLVVGLGNIGKEYKQTRHNIGFDVVDIIAEKYNIEINRQKFKGSYGEGRIGNEKIILLKPSTYMNLSGESVIEAANFYKIDKENIIVIYDDMSIDIGKLRVRGKGSAGGHNGIKNIIQHLNSDIFPRVRVGIGQPDENVVNYVLGKFSKDQREIIEKVLAMSAKACISIVEDGVTEAMNKYNGVKIEV.

Tyr14 is a tRNA binding site. Catalysis depends on His19, which acts as the Proton acceptor. Residues Tyr64, Asn66, and Asn112 each coordinate tRNA.

It belongs to the PTH family. Monomer.

It localises to the cytoplasm. The catalysed reaction is an N-acyl-L-alpha-aminoacyl-tRNA + H2O = an N-acyl-L-amino acid + a tRNA + H(+). Its function is as follows. Hydrolyzes ribosome-free peptidyl-tRNAs (with 1 or more amino acids incorporated), which drop off the ribosome during protein synthesis, or as a result of ribosome stalling. In terms of biological role, catalyzes the release of premature peptidyl moieties from peptidyl-tRNA molecules trapped in stalled 50S ribosomal subunits, and thus maintains levels of free tRNAs and 50S ribosomes. In Clostridium botulinum (strain 657 / Type Ba4), this protein is Peptidyl-tRNA hydrolase.